Here is a 321-residue protein sequence, read N- to C-terminus: Sex-lethal homolog (321 aa).

RRM domains lie at T78–P156 and T164–E244.

In terms of tissue distribution, expressed in gonads and somatic tissues of both sexes. In the ovary, expressed in the last egg chamber of each ovariole. Highly expressed in nurse cells with low expression found in oocytes. Highly expressed in testis with lower expression in testis sheath and vas deferentia.

The protein localises to the nucleus. Its function is as follows. Unknown; apparently not involved in somatic sex determination. The sequence is that of Sex-lethal homolog (SXL) from Megaselia scalaris (Humpbacked fly).